A 151-amino-acid chain; its full sequence is Lectin-like protein BA14k (151 aa).

An N-terminal signal peptide occupies residues 1-26; it reads MNIFKQTCVGAFAVIFGATSIAPTMA. Residues 83–103 traverse the membrane as a helical segment; it reads GWWYPLAAFGAGAIIGGAVSQ.

It belongs to the BA14k family.

It localises to the cell membrane. Functionally, has immunoglobulin-binding and hemagglutination properties, and can bind to mannose. Essential for virulence. May be involved in LPS biosynthesis or polysaccharide transport. In Brucella anthropi (strain ATCC 49188 / DSM 6882 / CCUG 24695 / JCM 21032 / LMG 3331 / NBRC 15819 / NCTC 12168 / Alc 37) (Ochrobactrum anthropi), this protein is Lectin-like protein BA14k.